The following is a 487-amino-acid chain: Argininosuccinate lyase (487 aa).

The protein belongs to the lyase 1 family. Argininosuccinate lyase subfamily.

It localises to the cytoplasm. The enzyme catalyses 2-(N(omega)-L-arginino)succinate = fumarate + L-arginine. It participates in amino-acid biosynthesis; L-arginine biosynthesis; L-arginine from L-ornithine and carbamoyl phosphate: step 3/3. The chain is Argininosuccinate lyase from Methanothrix thermoacetophila (strain DSM 6194 / JCM 14653 / NBRC 101360 / PT) (Methanosaeta thermophila).